Consider the following 55-residue polypeptide: Large ribosomal subunit protein bL33 (55 aa).

The protein belongs to the bacterial ribosomal protein bL33 family.

The polypeptide is Large ribosomal subunit protein bL33 (Kocuria rhizophila (strain ATCC 9341 / DSM 348 / NBRC 103217 / DC2201)).